Consider the following 90-residue polypeptide: Defensin-like protein 178 (90 aa).

Residues 1–23 (MAKATSSLVVPIIFLVIFALVEQ) form the signal peptide. 4 cysteine pairs are disulfide-bonded: Cys-27–Cys-66, Cys-36–Cys-55, Cys-39–Cys-60, and Cys-43–Cys-62.

It belongs to the DEFL family.

The protein localises to the secreted. The protein is Defensin-like protein 178 (LCR64) of Arabidopsis thaliana (Mouse-ear cress).